A 1088-amino-acid polypeptide reads, in one-letter code: Probable cellulose synthase A catalytic subunit 9 [UDP-forming] (1088 aa).

Met-1 carries the post-translational modification N-acetylmethionine. Topologically, residues Met-1–Met-283 are cytoplasmic. Zn(2+) contacts are provided by Cys-39, Cys-42, Cys-58, Cys-61, Cys-66, Cys-69, Cys-81, and Cys-84. The segment at Cys-39–Gly-85 adopts an RING-type; degenerate zinc-finger fold. Residues Leu-284–Val-304 form a helical membrane-spanning segment. Topologically, residues Asn-305–Asp-306 are extracellular. The helical transmembrane segment at Ala-307 to Leu-327 threads the bilayer. At Asp-328–Ser-871 the chain is on the cytoplasmic side. Positions 366, 372, 373, 402, and 543 each coordinate UDP-alpha-D-glucose. Asp-402 is an active-site residue. Mn(2+) contacts are provided by Lys-544 and Asp-568. Residue Asp-788 is part of the active site. The chain crosses the membrane as a helical span at residues Leu-872–Val-892. The Extracellular portion of the chain corresponds to Pro-893–Asn-897. The helical transmembrane segment at Tyr-898–Met-918 threads the bilayer. Residues Gln-919–Gln-933 are Cytoplasmic-facing. Residues Phe-934–Val-954 form a helical membrane-spanning segment. The Extracellular portion of the chain corresponds to Leu-955–Thr-983. Asn-961 carries an N-linked (GlcNAc...) asparagine glycan. The helical transmembrane segment at Ser-984–Val-1004 threads the bilayer. The Cytoplasmic segment spans residues Ser-1005–Trp-1015. Residues Gly-1016 to Leu-1036 traverse the membrane as a helical segment. The Extracellular portion of the chain corresponds to Lys-1037 to Arg-1045. Residues Val-1046–Val-1066 traverse the membrane as a helical segment. Topologically, residues Arg-1067–Lys-1088 are cytoplasmic.

It belongs to the glycosyltransferase 2 family. Plant cellulose synthase subfamily. Mn(2+) serves as cofactor. It depends on Zn(2+) as a cofactor. As to expression, expressed in young plants, stems and flowers.

It is found in the cell membrane. It catalyses the reaction [(1-&gt;4)-beta-D-glucosyl](n) + UDP-alpha-D-glucose = [(1-&gt;4)-beta-D-glucosyl](n+1) + UDP + H(+). The protein operates within glycan metabolism; plant cellulose biosynthesis. In terms of biological role, probable catalytic subunit of cellulose synthase terminal complexes ('rosettes'), required for beta-1,4-glucan microfibril crystallization, a major mechanism of the cell wall formation. The sequence is that of Probable cellulose synthase A catalytic subunit 9 [UDP-forming] from Arabidopsis thaliana (Mouse-ear cress).